The chain runs to 317 residues: Acetyl-coenzyme A carboxylase carboxyl transferase subunit alpha (317 aa).

In terms of domain architecture, CoA carboxyltransferase C-terminal spans 40 to 293 (LEKRSADALK…GDIIAASLRS (254 aa)).

This sequence belongs to the AccA family. In terms of assembly, acetyl-CoA carboxylase is a heterohexamer composed of biotin carboxyl carrier protein (AccB), biotin carboxylase (AccC) and two subunits each of ACCase subunit alpha (AccA) and ACCase subunit beta (AccD).

The protein localises to the cytoplasm. The catalysed reaction is N(6)-carboxybiotinyl-L-lysyl-[protein] + acetyl-CoA = N(6)-biotinyl-L-lysyl-[protein] + malonyl-CoA. It participates in lipid metabolism; malonyl-CoA biosynthesis; malonyl-CoA from acetyl-CoA: step 1/1. Component of the acetyl coenzyme A carboxylase (ACC) complex. First, biotin carboxylase catalyzes the carboxylation of biotin on its carrier protein (BCCP) and then the CO(2) group is transferred by the carboxyltransferase to acetyl-CoA to form malonyl-CoA. The polypeptide is Acetyl-coenzyme A carboxylase carboxyl transferase subunit alpha (Brucella abortus (strain S19)).